The following is an 89-amino-acid chain: Small ribosomal subunit protein uS15 (89 aa).

Belongs to the universal ribosomal protein uS15 family. Part of the 30S ribosomal subunit. Forms a bridge to the 50S subunit in the 70S ribosome, contacting the 23S rRNA.

One of the primary rRNA binding proteins, it binds directly to 16S rRNA where it helps nucleate assembly of the platform of the 30S subunit by binding and bridging several RNA helices of the 16S rRNA. Functionally, forms an intersubunit bridge (bridge B4) with the 23S rRNA of the 50S subunit in the ribosome. The protein is Small ribosomal subunit protein uS15 of Streptococcus mutans serotype c (strain ATCC 700610 / UA159).